Consider the following 288-residue polypeptide: MSKQLLALNIDGALLRSNGKIHQATKDAIEYVKKKGIYVTLVTNRHFRSAQKIAKSLKLDAKLITHSGAYIAEKIDAPFFEKRISDDHTFNIVQVLESYQCNIRLLHEKYSIGNKKKVNSNLLGKALIHPSDPIFYPVQFVESLSDLLMDEPVSAPVIEVYTEHDIQHDITETITKAFPAVDVIRVNDEKLNIVPKGVSKEAGLALVASELGLSMDDVVAIGHQYDDLPMIELAGLGVAMGNAVPEIKRKADWVTRSNDEQGVAYMMKEYFRMQQRKGFLDKFHMKRV.

The polypeptide is Stress response protein YhaX (yhaX) (Bacillus subtilis (strain 168)).